Reading from the N-terminus, the 139-residue chain is Nucleoside diphosphate kinase (139 aa).

ATP is bound by residues K11, F59, R87, T93, R104, and N114. Catalysis depends on H117, which acts as the Pros-phosphohistidine intermediate.

It belongs to the NDK family. In terms of assembly, homotetramer. The cofactor is Mg(2+).

The protein resides in the cytoplasm. The catalysed reaction is a 2'-deoxyribonucleoside 5'-diphosphate + ATP = a 2'-deoxyribonucleoside 5'-triphosphate + ADP. It catalyses the reaction a ribonucleoside 5'-diphosphate + ATP = a ribonucleoside 5'-triphosphate + ADP. Functionally, major role in the synthesis of nucleoside triphosphates other than ATP. The ATP gamma phosphate is transferred to the NDP beta phosphate via a ping-pong mechanism, using a phosphorylated active-site intermediate. The polypeptide is Nucleoside diphosphate kinase (Wolbachia sp. subsp. Brugia malayi (strain TRS)).